The chain runs to 428 residues: Maltoporin (428 aa).

Residues 1–21 form the signal peptide; the sequence is MKKTLLAVAIGGAMFATSAAA.

This sequence belongs to the porin LamB (TC 1.B.3) family. In terms of assembly, homotrimer formed of three 18-stranded antiparallel beta-barrels, containing three independent channels.

It is found in the cell outer membrane. It catalyses the reaction beta-maltose(in) = beta-maltose(out). In terms of biological role, involved in the transport of maltose and maltodextrins. The polypeptide is Maltoporin (Mannheimia succiniciproducens (strain KCTC 0769BP / MBEL55E)).